A 303-amino-acid polypeptide reads, in one-letter code: Ribonuclease HIII (303 aa).

The 218-residue stretch at 85–302 folds into the RNase H type-2 domain; sequence CSLIGSDEVG…TKKAYQLLKK (218 aa). A divalent metal cation contacts are provided by Asp-91, Glu-92, and Asp-196.

This sequence belongs to the RNase HII family. RnhC subfamily. Requires Mn(2+) as cofactor. The cofactor is Mg(2+).

Its subcellular location is the cytoplasm. It catalyses the reaction Endonucleolytic cleavage to 5'-phosphomonoester.. Its function is as follows. Endonuclease that specifically degrades the RNA of RNA-DNA hybrids. The chain is Ribonuclease HIII from Streptococcus mutans serotype c (strain ATCC 700610 / UA159).